We begin with the raw amino-acid sequence, 494 residues long: Endoglucanase 22 (494 aa).

Positions 1 to 21 are cleaved as a signal peptide; the sequence is MKPLVCSFIVILLILLPTTIS. Aspartate 76 functions as the Nucleophile in the catalytic mechanism. Histidine 413 is an active-site residue. The N-linked (GlcNAc...) asparagine glycan is linked to asparagine 468. The active site involves glutamate 473.

The protein belongs to the glycosyl hydrolase 9 (cellulase E) family.

The protein localises to the secreted. The catalysed reaction is Endohydrolysis of (1-&gt;4)-beta-D-glucosidic linkages in cellulose, lichenin and cereal beta-D-glucans.. The chain is Endoglucanase 22 (GH9B16) from Arabidopsis thaliana (Mouse-ear cress).